The chain runs to 254 residues: Proteasome subunit alpha type-7 (254 aa).

O-linked (GlcNAc) serine glycosylation occurs at S136. The residue at position 159 (Y159) is a Phosphotyrosine. At K233 the chain carries N6-acetyllysine.

It belongs to the peptidase T1A family. As to quaternary structure, the 26S proteasome consists of a 20S proteasome core and two 19S regulatory subunits. The 20S proteasome core is a barrel-shaped complex made of 28 subunits that are arranged in four stacked rings. The two outer rings are each formed by seven alpha subunits, and the two inner rings are formed by seven beta subunits. The proteolytic activity is exerted by three beta-subunits PSMB5, PSMB6 and PSMB7. PSMA7 interacts directly with the PSMG1-PSMG2 heterodimer which promotes 20S proteasome assembly. Interacts with HIF1A. Interacts with RAB7A. Interacts with PRKN. Interacts with ABL1 and ABL2. Interacts with EMAP2. Interacts with MAVS. Ubiquitous.

The protein localises to the cytoplasm. It is found in the nucleus. Functionally, component of the 20S core proteasome complex involved in the proteolytic degradation of most intracellular proteins. This complex plays numerous essential roles within the cell by associating with different regulatory particles. Associated with two 19S regulatory particles, forms the 26S proteasome and thus participates in the ATP-dependent degradation of ubiquitinated proteins. The 26S proteasome plays a key role in the maintenance of protein homeostasis by removing misfolded or damaged proteins that could impair cellular functions, and by removing proteins whose functions are no longer required. Associated with the PA200 or PA28, the 20S proteasome mediates ubiquitin-independent protein degradation. This type of proteolysis is required in several pathways including spermatogenesis (20S-PA200 complex) or generation of a subset of MHC class I-presented antigenic peptides (20S-PA28 complex). Inhibits the transactivation function of HIF-1A under both normoxic and hypoxia-mimicking conditions. The interaction with EMAP2 increases the proteasome-mediated HIF-1A degradation under the hypoxic conditions. Plays a role in hepatitis C virus internal ribosome entry site-mediated translation. Mediates nuclear translocation of the androgen receptor (AR) and thereby enhances androgen-mediated transactivation. Promotes MAVS degradation and thereby negatively regulates MAVS-mediated innate immune response. The chain is Proteasome subunit alpha type-7 (Psma7) from Rattus norvegicus (Rat).